Consider the following 180-residue polypeptide: Shikimate kinase (180 aa).

14–19 (GAGKST) contributes to the ATP binding site. Residue Ser-18 coordinates Mg(2+). Residues Asp-36, Arg-60, and Gly-82 each contribute to the substrate site. Arg-120 is an ATP binding site. Arg-139 contributes to the substrate binding site.

This sequence belongs to the shikimate kinase family. Monomer. Mg(2+) is required as a cofactor.

The protein localises to the cytoplasm. The catalysed reaction is shikimate + ATP = 3-phosphoshikimate + ADP + H(+). It functions in the pathway metabolic intermediate biosynthesis; chorismate biosynthesis; chorismate from D-erythrose 4-phosphate and phosphoenolpyruvate: step 5/7. Its function is as follows. Catalyzes the specific phosphorylation of the 3-hydroxyl group of shikimic acid using ATP as a cosubstrate. In Chromohalobacter salexigens (strain ATCC BAA-138 / DSM 3043 / CIP 106854 / NCIMB 13768 / 1H11), this protein is Shikimate kinase.